Reading from the N-terminus, the 1004-residue chain is Kinesin-like protein KIN-7I (1004 aa).

Positions 6-326 constitute a Kinesin motor domain; that stretch reads KILVSVRVRP…LLFATCAKEV (321 aa). Position 89–96 (89–96) interacts with ATP; the sequence is GQTSSGKT. Coiled-coil stretches lie at residues 335–402, 517–576, and 634–661; these read VVSE…AQSR, KKEY…QKQS, and SVEK…DQSE. Disordered stretches follow at residues 567–599, 628–671, and 802–830; these read EQSV…KSLP, SQQT…PEDE, and TMQH…GEKT. Composition is skewed to basic and acidic residues over residues 569 to 582 and 634 to 652; these read SVEK…KEEM and SVEK…EDLK. The span at 653-663 shows a compositional bias: polar residues; it reads QNLSMDQSEQL. Lys881 is covalently cross-linked (Glycyl lysine isopeptide (Lys-Gly) (interchain with G-Cter in ubiquitin)).

It belongs to the TRAFAC class myosin-kinesin ATPase superfamily. Kinesin family. KIN-7 subfamily.

The protein is Kinesin-like protein KIN-7I of Arabidopsis thaliana (Mouse-ear cress).